The sequence spans 232 residues: ATP synthase subunit a (232 aa).

6 consecutive transmembrane segments (helical) span residues 18-38 (LLFIPMNLFSIVFALSWIAFI), 74-94 (WAGLITTVFIVILSANVLGLF), 107-127 (TYSLGFPIWMAVNILGFYLAF), 142-162 (ALIPLMVWIETLSLFAQPIAL), 173-193 (GHLLIFLLSTAIWLLSSSLMV), and 195-215 (SIPIFVIFVLLFILEIGVACI).

Belongs to the ATPase A chain family. F-type ATPases have 2 components, CF(1) - the catalytic core - and CF(0) - the membrane proton channel. CF(1) has five subunits: alpha(3), beta(3), gamma(1), delta(1), epsilon(1). CF(0) has three main subunits: a, b and c.

It localises to the mitochondrion inner membrane. Functionally, mitochondrial membrane ATP synthase (F(1)F(0) ATP synthase or Complex V) produces ATP from ADP in the presence of a proton gradient across the membrane which is generated by electron transport complexes of the respiratory chain. F-type ATPases consist of two structural domains, F(1) - containing the extramembraneous catalytic core and F(0) - containing the membrane proton channel, linked together by a central stalk and a peripheral stalk. During catalysis, ATP synthesis in the catalytic domain of F(1) is coupled via a rotary mechanism of the central stalk subunits to proton translocation. Key component of the proton channel; it may play a direct role in the translocation of protons across the membrane. This chain is ATP synthase subunit a (ATP6), found in Paracentrotus lividus (Common sea urchin).